Consider the following 509-residue polypeptide: Glycogen synthase (509 aa).

An ADP-alpha-D-glucose-binding site is contributed by Lys47.

Belongs to the glycosyltransferase 1 family. Bacterial/plant glycogen synthase subfamily.

The enzyme catalyses [(1-&gt;4)-alpha-D-glucosyl](n) + ADP-alpha-D-glucose = [(1-&gt;4)-alpha-D-glucosyl](n+1) + ADP + H(+). It participates in glycan biosynthesis; glycogen biosynthesis. Synthesizes alpha-1,4-glucan chains using ADP-glucose. This is Glycogen synthase from Xanthomonas oryzae pv. oryzae (strain PXO99A).